Here is a 370-residue protein sequence, read N- to C-terminus: Protein-tyrosine sulfotransferase 1 (370 aa).

Residues 1–8 lie on the Cytoplasmic side of the membrane; that stretch reads MVGKLKQN. The chain crosses the membrane as a helical; Signal-anchor for type II membrane protein span at residues 9–25; it reads LLLACLVISSVTVFYLG. At 26 to 370 the chain is on the lumenal side; it reads QHAMECHHRI…KEKPQTEQVE (345 aa). N-linked (GlcNAc...) asparagine glycosylation is present at N60. Position 79–83 (79–83) interacts with 3'-phosphoadenylyl sulfate; that stretch reads RSGTT. A disulfide bond links C97 and C157. E100 serves as the catalytic Proton donor/acceptor. Residues 102–106 form an interaction with peptide substrate region; the sequence is RVIPR. 3 residues coordinate 3'-phosphoadenylyl sulfate: R184, S192, and R196. C226 and C234 are joined by a disulfide. 3'-phosphoadenylyl sulfate is bound at residue Y239. N-linked (GlcNAc...) asparagine glycosylation occurs at N262. Residues 286-295 and K301 contribute to the 3'-phosphoadenylyl sulfate site; that span reads STDQVIKPVN.

The protein belongs to the protein sulfotransferase family. As to quaternary structure, homodimer. Can also form heterodimers with TPST2. N-glycosylated. As to expression, ubiquitous. Detected in heart, brain, placenta, lung, liver, skeletal muscle, kidney and pancreas.

Its subcellular location is the golgi apparatus membrane. It catalyses the reaction L-tyrosyl-[protein] + 3'-phosphoadenylyl sulfate = O-sulfo-L-tyrosine-[protein] + adenosine 3',5'-bisphosphate + H(+). Catalyzes the O-sulfation of tyrosine residues within acidic motifs of polypeptides, using 3'-phosphoadenylyl sulfate (PAPS) as cosubstrate. In Homo sapiens (Human), this protein is Protein-tyrosine sulfotransferase 1 (TPST1).